The sequence spans 475 residues: Probable proline--tRNA ligase, mitochondrial (475 aa).

A mitochondrion-targeting transit peptide spans 1 to 29 (MEGLLTRCRTLSALAACSLRHCRYIIHKC).

This sequence belongs to the class-II aminoacyl-tRNA synthetase family.

It is found in the mitochondrion matrix. The enzyme catalyses tRNA(Pro) + L-proline + ATP = L-prolyl-tRNA(Pro) + AMP + diphosphate. In terms of biological role, mitochondrial aminoacyl-tRNA synthetase that catalyzes the specific attachment of the proline amino acid (aa) to the homologous transfer RNA (tRNA), further participating in protein synthesis. The reaction occurs in a two steps: proline is first activated by ATP to form Pro-AMP and then transferred to the acceptor end of tRNA(Pro). The protein is Probable proline--tRNA ligase, mitochondrial (Pars2) of Mus musculus (Mouse).